We begin with the raw amino-acid sequence, 575 residues long: 2-isopropylmalate synthase (575 aa).

A Pyruvate carboxyltransferase domain is found at Pro40–Asp314. 4 residues coordinate Mg(2+): Asp49, His253, His255, and Asn289. Positions Ser456 to Arg575 are regulatory domain.

Belongs to the alpha-IPM synthase/homocitrate synthase family. LeuA type 2 subfamily. Homodimer. Mg(2+) is required as a cofactor.

The protein localises to the cytoplasm. The catalysed reaction is 3-methyl-2-oxobutanoate + acetyl-CoA + H2O = (2S)-2-isopropylmalate + CoA + H(+). The protein operates within amino-acid biosynthesis; L-leucine biosynthesis; L-leucine from 3-methyl-2-oxobutanoate: step 1/4. Functionally, catalyzes the condensation of the acetyl group of acetyl-CoA with 3-methyl-2-oxobutanoate (2-ketoisovalerate) to form 3-carboxy-3-hydroxy-4-methylpentanoate (2-isopropylmalate). The chain is 2-isopropylmalate synthase from Kineococcus radiotolerans (strain ATCC BAA-149 / DSM 14245 / SRS30216).